Consider the following 142-residue polypeptide: UPF0102 protein Bamb_0202 (142 aa).

Residues 1-23 (MCHAAPAAPASGRGLPHGGGNFS) are disordered.

It belongs to the UPF0102 family.

This chain is UPF0102 protein Bamb_0202, found in Burkholderia ambifaria (strain ATCC BAA-244 / DSM 16087 / CCUG 44356 / LMG 19182 / AMMD) (Burkholderia cepacia (strain AMMD)).